Reading from the N-terminus, the 423-residue chain is Putative competence-damage inducible protein (423 aa).

It belongs to the CinA family.

The protein is Putative competence-damage inducible protein of Streptococcus pyogenes serotype M4 (strain MGAS10750).